The following is a 324-amino-acid chain: G patch domain-containing protein 4 (324 aa).

Disordered regions lie at residues M1–L30 and L123–E324. Positions G11 to A57 constitute a G-patch domain. Residues F14–L30 show a composition bias toward basic and acidic residues. A compositionally biased stretch (low complexity) spans K131–S141. Residues S186–R215 show a composition bias toward basic and acidic residues. Residues H244 to R253 show a composition bias toward basic residues. The segment covering A254–E270 has biased composition (basic and acidic residues). Over residues P296–F309 the composition is skewed to polar residues. A compositionally biased stretch (basic residues) spans K312–E324.

This is G patch domain-containing protein 4 (gpatch4) from Xenopus laevis (African clawed frog).